The following is a 425-amino-acid chain: Serine--tRNA ligase (425 aa).

228–230 contributes to the L-serine binding site; the sequence is TAE. ATP is bound at residue 259–261; it reads RSE. Glu282 is an L-serine binding site. 346 to 349 lines the ATP pocket; that stretch reads EIAS. Ser382 serves as a coordination point for L-serine.

It belongs to the class-II aminoacyl-tRNA synthetase family. Type-1 seryl-tRNA synthetase subfamily. In terms of assembly, homodimer. The tRNA molecule binds across the dimer.

It is found in the cytoplasm. The catalysed reaction is tRNA(Ser) + L-serine + ATP = L-seryl-tRNA(Ser) + AMP + diphosphate + H(+). It carries out the reaction tRNA(Sec) + L-serine + ATP = L-seryl-tRNA(Sec) + AMP + diphosphate + H(+). It participates in aminoacyl-tRNA biosynthesis; selenocysteinyl-tRNA(Sec) biosynthesis; L-seryl-tRNA(Sec) from L-serine and tRNA(Sec): step 1/1. In terms of biological role, catalyzes the attachment of serine to tRNA(Ser). Is also able to aminoacylate tRNA(Sec) with serine, to form the misacylated tRNA L-seryl-tRNA(Sec), which will be further converted into selenocysteinyl-tRNA(Sec). The chain is Serine--tRNA ligase from Rickettsia massiliae (strain Mtu5).